We begin with the raw amino-acid sequence, 586 residues long: MKQSVSAEQIELKSSLPGSKKVYVDGPREGMKVPMREIEQSDTNGVPNPPIRVYDTSGPYTDPAYKVELEKGIPTPRHSWILERGDVEAYEGREVKPEDDGVKVASKHTPVFPQMDRKPLRAKQGANVTQMHYARNGIITSEMEYVAIREGVEPEFVRKEIAEGRAILPANINHPEAEPMIIGRNFHVKVNANIGNSAVSSSIAEEVEKMTWATRWGADTIMDLSTGKNIHTTREWIIRNAPVPVGTVPIYQALEKVNGIAEDLTWEVYRDTLIEQAEQGVDYFTIHAGVLLRYIPITAKRTTGIVSRGGSIMAQWCLFHHKENFLYTHFEEICEIMKQYDVSFSLGDGLRPGSIADANDEAQFSELETLGELTKIAWKHDVQVMIEGPGHVPMHLIKENMEKELDICQGAPFYTLGPLTTDIAPGYDHITSAIGAAMIGWFGTAMLCYVTPKEHLGLPNKDDVREGVITYKIAAHAADLAKGHKTAHQRDDALSKARFEFRWRDQFNLSLDPERAMEYHDETLPAEGAKTAHFCSMCGPKFCSMRISHDIREYAKENDLETTEAIEKGMKEKAKEFKDTGSHLYQ.

Residues 1 to 59 form a disordered region; that stretch reads MKQSVSAEQIELKSSLPGSKKVYVDGPREGMKVPMREIEQSDTNGVPNPPIRVYDTSGP. The span at 22-39 shows a compositional bias: basic and acidic residues; that stretch reads VYVDGPREGMKVPMREIE. Residues N193, M222, Y251, H287, 307–309, 348–351, and E387 each bind substrate; these read SRG and DGLR. A Zn(2+)-binding site is contributed by H391. Y414 contributes to the substrate binding site. Position 455 (H455) interacts with Zn(2+). [4Fe-4S] cluster contacts are provided by C535, C538, and C543.

This sequence belongs to the ThiC family. The cofactor is [4Fe-4S] cluster.

It catalyses the reaction 5-amino-1-(5-phospho-beta-D-ribosyl)imidazole + S-adenosyl-L-methionine = 4-amino-2-methyl-5-(phosphooxymethyl)pyrimidine + CO + 5'-deoxyadenosine + formate + L-methionine + 3 H(+). Its pathway is cofactor biosynthesis; thiamine diphosphate biosynthesis. Catalyzes the synthesis of the hydroxymethylpyrimidine phosphate (HMP-P) moiety of thiamine from aminoimidazole ribotide (AIR) in a radical S-adenosyl-L-methionine (SAM)-dependent reaction. The chain is Phosphomethylpyrimidine synthase from Bacillus cereus (strain Q1).